The chain runs to 2475 residues: Polyprotein pp220 (2475 aa).

The N-myristoyl glycine; by host moiety is linked to residue glycine 2. The stretch at 2184–2211 (RNQIIGELNAFRTQLEDTLREVNNLVQT) forms a coiled coil.

This sequence belongs to the asfivirus polyprotein pp220 family. Post-translationally, specific enzymatic cleavages in vivo by the viral pS273R protease yield mature proteins.

Its subcellular location is the host cytoplasm. It localises to the host perinuclear region. It is found in the virion. The protein resides in the host nucleus. Essential for the core assembly. Its myristoyl moiety may function as a membrane-anchoring signal to bind the developing core shell to the inner viral envelope. In terms of biological role, the structural protein p34 is a component of the virus core shell. Functionally, the structural protein p14 is a component of the virus core shell. Its function is as follows. The structural protein p37 is a component of the virus core shell. The structural protein p150 is a component of the virus core shell. The sequence is that of Polyprotein pp220 from African swine fever virus (isolate Tick/Malawi/Lil 20-1/1983) (ASFV).